A 461-amino-acid polypeptide reads, in one-letter code: MPAPSTTLLIEGSFSELADEFAQYIDALRKTEPSLQAELSPLLEPLRQQEQSDAEPDRKQRDEVLKKLVSAATVLNTAPEKEIISAYNLLVHLVHHASDPDMFLSRICSYLAKPITSSPQFGPSLAISILSTIFNTLPATDSSRYHVLLAIVAVIRQSAQGVAFEALKPQLTAQLPTWLAAWELDEDEAQRLHLAIADAAQAAGDQELAQTHVVQALQTIPAADASKKEARDLAVRALTSALSHPAVFDFTPLTASDAVQALRTSDSTLFELLEIFTADTLDAYEAFVAATPLASISGGVLAPAADALQNKMRLLTLASLAASTPSRSLPYATIASALRVPAEDVEKWVIDTIRAGLVEGKLSQLRSEFLVHRATYRVFGEKQWAEVQGRLMVWRRSLENVLGVVRSERERFIRENLQAAQAAEEAAQGKSGDKKGDRRQRRDQPQQSQPAPEAATAVAAE.

Positions 42 to 61 (LLEPLRQQEQSDAEPDRKQR) are disordered. The PCI domain occupies 205 to 376 (DQELAQTHVV…SEFLVHRATY (172 aa)). A disordered region spans residues 422 to 461 (AAEEAAQGKSGDKKGDRRQRRDQPQQSQPAPEAATAVAAE). Over residues 431-444 (SGDKKGDRRQRRDQ) the composition is skewed to basic and acidic residues. Over residues 445–461 (PQQSQPAPEAATAVAAE) the composition is skewed to low complexity.

This sequence belongs to the eIF-3 subunit M family. In terms of assembly, component of the eukaryotic translation initiation factor 3 (eIF-3) complex.

The protein localises to the cytoplasm. Its function is as follows. Component of the eukaryotic translation initiation factor 3 (eIF-3) complex, which is involved in protein synthesis of a specialized repertoire of mRNAs and, together with other initiation factors, stimulates binding of mRNA and methionyl-tRNAi to the 40S ribosome. The eIF-3 complex specifically targets and initiates translation of a subset of mRNAs involved in cell proliferation. This chain is Eukaryotic translation initiation factor 3 subunit M, found in Aspergillus terreus (strain NIH 2624 / FGSC A1156).